Here is a 611-residue protein sequence, read N- to C-terminus: Chloroplast sensor kinase, chloroplastic (611 aa).

The N-terminal 79 residues, 1–79 (MLLSAIASQT…PGGGETMVAS (79 aa)), are a transit peptide targeting the chloroplast. Residues 17–50 (NLHFSNSIPNPRPSNPSLKLLNASSSSSSSSSSS) are disordered. Positions 40–50 (SSSSSSSSSSS) are enriched in low complexity. A GAF region spans residues 116 to 300 (DFQRLCLEQL…VMDQKTMLLQ (185 aa)). C121 contacts [3Fe-4S] cluster. S188 bears the Phosphoserine mark. In terms of domain architecture, Histidine kinase spans 312–602 (KLVEQIRGPL…RVELWLPAFP (291 aa)). The stretch at 345–380 (VEDLIVQGDQIKDTLEELQDAVHLTKANIVRHNEEA) forms a coiled coil. Over residues 385 to 402 (NKTHNETRRSKYEHKDPI) the composition is skewed to basic and acidic residues. The disordered stretch occupies residues 385-420 (NKTHNETRRSKYEHKDPIDGSQISSTRLSLGSGLDD).

Belongs to the chloroplast sensor kinase protein family. In terms of assembly, self-interacts. Interacts with the plastoquinone analog 2,5-dibromo-3-methyl-5-isopropyl-p-benzoquinone (DBMIB) and with SIGA/SIG1. The cofactor is [3Fe-4S] cluster. In terms of processing, autophosphorylated, possibly on tyrosine residues, in photosystem I (PS I) light and in the presence of manganese ions Mn(2+), to a lesser degree, in the presence of calcium ions Ca(2+), but not in the presence of magnesium ions Mg(2+). Dithiothreitol (DTT) stimulates autophosphorylation. Phosphorylated on Ser-188 in vivo after exposure to far-red light (when plastoquinone (PQ) is oxidized). Not phosphorylated under orange light (reduces PQ).

Its subcellular location is the plastid. The protein resides in the chloroplast stroma. The catalysed reaction is L-tyrosyl-[protein] + ATP = O-phospho-L-tyrosyl-[protein] + ADP + H(+). Sensor kinase that senses the plastoquinone (PQ) redox state involved in stoichiometry adjustment of both photosystems (e.g. long-term adaptation via transcriptional regulation of reaction center genes of photosystems I and II) and state transitions (e.g. short-term adaptation involving reversible post-translational phosphorylation of light-harvesting complex II, LHC II), thus linking photosynthesis with gene expression in chloroplasts. Autophosphorylates, probably on a tyrosine residue. Probably phosphorylates SIGA/SIG1 in response to plastoquinone redox state modification. Reduced PQ suppresses its autophosphorylation activity. Represses expression of a number of chloroplast-encoded genes. The protein is Chloroplast sensor kinase, chloroplastic of Arabidopsis thaliana (Mouse-ear cress).